The primary structure comprises 373 residues: Dual-specificity RNA methyltransferase RlmN (373 aa).

Glutamate 94 functions as the Proton acceptor in the catalytic mechanism. The Radical SAM core domain maps to glutamate 100–aspartate 339. Cysteine 107 and cysteine 344 are joined by a disulfide. Residues cysteine 114, cysteine 118, and cysteine 121 each coordinate [4Fe-4S] cluster. Residues glycine 168–glutamate 169, serine 200, serine 222–histidine 224, and asparagine 301 contribute to the S-adenosyl-L-methionine site. The active-site S-methylcysteine intermediate is the cysteine 344.

It belongs to the radical SAM superfamily. RlmN family. The cofactor is [4Fe-4S] cluster.

It localises to the cytoplasm. It carries out the reaction adenosine(2503) in 23S rRNA + 2 reduced [2Fe-2S]-[ferredoxin] + 2 S-adenosyl-L-methionine = 2-methyladenosine(2503) in 23S rRNA + 5'-deoxyadenosine + L-methionine + 2 oxidized [2Fe-2S]-[ferredoxin] + S-adenosyl-L-homocysteine. It catalyses the reaction adenosine(37) in tRNA + 2 reduced [2Fe-2S]-[ferredoxin] + 2 S-adenosyl-L-methionine = 2-methyladenosine(37) in tRNA + 5'-deoxyadenosine + L-methionine + 2 oxidized [2Fe-2S]-[ferredoxin] + S-adenosyl-L-homocysteine. Functionally, specifically methylates position 2 of adenine 2503 in 23S rRNA and position 2 of adenine 37 in tRNAs. m2A2503 modification seems to play a crucial role in the proofreading step occurring at the peptidyl transferase center and thus would serve to optimize ribosomal fidelity. This chain is Dual-specificity RNA methyltransferase RlmN, found in Shewanella sediminis (strain HAW-EB3).